We begin with the raw amino-acid sequence, 132 residues long: Small ribosomal subunit protein uS8 (132 aa).

The protein belongs to the universal ribosomal protein uS8 family. Part of the 30S ribosomal subunit. Contacts proteins S5 and S12.

One of the primary rRNA binding proteins, it binds directly to 16S rRNA central domain where it helps coordinate assembly of the platform of the 30S subunit. In Corynebacterium efficiens (strain DSM 44549 / YS-314 / AJ 12310 / JCM 11189 / NBRC 100395), this protein is Small ribosomal subunit protein uS8.